Reading from the N-terminus, the 513-residue chain is Xylose import ATP-binding protein XylG (513 aa).

ABC transporter domains follow at residues 5–242 (LEMK…VERE) and 259–505 (LRIE…LRSE). Residue 37–44 (GENGSGKS) participates in ATP binding.

It belongs to the ABC transporter superfamily. Xylose importer (TC 3.A.1.2.4) family. In terms of assembly, the complex is composed of two ATP-binding proteins (XylG), two transmembrane proteins (XylH) and a solute-binding protein (XylF).

It localises to the cell inner membrane. The catalysed reaction is D-xylose(out) + ATP + H2O = D-xylose(in) + ADP + phosphate + H(+). Its function is as follows. Part of the ABC transporter complex XylFGH involved in xylose import. Responsible for energy coupling to the transport system. This is Xylose import ATP-binding protein XylG from Shigella flexneri.